A 486-amino-acid polypeptide reads, in one-letter code: Alpha-L-arabinofuranosidase B (486 aa).

The N-terminal stretch at 1 to 25 (MLSLKAVLRFASVAVAVVLPTLAQA) is a signal peptide. Asn42 carries an N-linked (GlcNAc...) asparagine glycan. The segment at 45 to 342 (LVKQRADPQI…KLYWRSDGTP (298 aa)) is catalytic. The active-site Proton acceptor is Asp51. Glu229 serves as the catalytic Proton donor. N-linked (GlcNAc...) asparagine glycans are attached at residues Asn302, Asn416, and Asn426. An ABD region spans residues 359-467 (SSADQTLYVG…AGSYLVSGGN (109 aa)).

It belongs to the glycosyl hydrolase 43 family.

It is found in the secreted. It catalyses the reaction Hydrolysis of terminal non-reducing alpha-L-arabinofuranoside residues in alpha-L-arabinosides.. The protein operates within glycan metabolism; L-arabinan degradation. In terms of biological role, secreted arabinofuranosidase that causes degradation of rice cell wall components during infection. Required for virulence. This Pyricularia oryzae (strain 70-15 / ATCC MYA-4617 / FGSC 8958) (Rice blast fungus) protein is Alpha-L-arabinofuranosidase B.